A 193-amino-acid polypeptide reads, in one-letter code: Oligoribonuclease (193 aa).

The region spanning 14–177 (LIWIDLEMTG…SDIYDSIAEL (164 aa)) is the Exonuclease domain. Residue Tyr135 is part of the active site.

This sequence belongs to the oligoribonuclease family.

The protein localises to the cytoplasm. 3'-to-5' exoribonuclease specific for small oligoribonucleotides. The polypeptide is Oligoribonuclease (Xylella fastidiosa (strain Temecula1 / ATCC 700964)).